A 172-amino-acid chain; its full sequence is Urease accessory protein UreE (172 aa).

This sequence belongs to the UreE family.

Its subcellular location is the cytoplasm. Involved in urease metallocenter assembly. Binds nickel. Probably functions as a nickel donor during metallocenter assembly. This chain is Urease accessory protein UreE, found in Shewanella halifaxensis (strain HAW-EB4).